A 782-amino-acid chain; its full sequence is Polyribonucleotide nucleotidyltransferase (782 aa).

Mg(2+) contacts are provided by aspartate 514 and aspartate 520. One can recognise a KH domain in the interval 580-639 (PRIITIKIPVDQIGAVIGPKGKIINQIQDDTGAEITIEDDGTIYIGATEGTAAEAARAAI). The S1 motif domain maps to 651–723 (GERYLGTVVK…ARGKLSLVPV (73 aa)). Positions 734–753 (AGAGESAASGGAPRSAGGPQ) are enriched in low complexity. The tract at residues 734–782 (AGAGESAASGGAPRSAGGPQPREHQGPGRPRGRGGDHGGEGRQRTRRRH) is disordered. Positions 766–776 (RGGDHGGEGRQ) are enriched in basic and acidic residues.

This sequence belongs to the polyribonucleotide nucleotidyltransferase family. Requires Mg(2+) as cofactor.

Its subcellular location is the cytoplasm. It carries out the reaction RNA(n+1) + phosphate = RNA(n) + a ribonucleoside 5'-diphosphate. Functionally, involved in mRNA degradation. Catalyzes the phosphorolysis of single-stranded polyribonucleotides processively in the 3'- to 5'-direction. The protein is Polyribonucleotide nucleotidyltransferase of Acidothermus cellulolyticus (strain ATCC 43068 / DSM 8971 / 11B).